A 213-amino-acid chain; its full sequence is MTTIQPAPMAFFTNRPTTEIARDLLGTHLLYTSHQGTLGGLIVETEAYMGAQDTAAHAYNGRRTPFSEPLYHEPGTIYIYQLRSFFLFDIVTQAVDQPQGVLIRAIEPTHGLAQMQRNRPNKPSVNLTNGPGKLMGALGIHDKQLTFKNVATAPLTIDLANRRQPRHITTAPRIGVNAKAASGQLPYRYFITGNPYVSGTLKKDWDREQHGWL.

Belongs to the DNA glycosylase MPG family.

The chain is Putative 3-methyladenine DNA glycosylase from Latilactobacillus sakei subsp. sakei (strain 23K) (Lactobacillus sakei subsp. sakei).